The primary structure comprises 215 residues: UPF0502 protein YceH (215 aa).

Lys80 carries the N6-acetyllysine modification.

Belongs to the UPF0502 family.

This chain is UPF0502 protein YceH, found in Escherichia coli O127:H6 (strain E2348/69 / EPEC).